The primary structure comprises 155 residues: Nuclear cap-binding protein subunit 2 (155 aa).

Residues Y19, Y42, 111 to 115, 122 to 126, and 132 to 133 each bind mRNA; these read RTDWD, RQYGR, and QV. The RRM domain maps to 39–117; sequence NTLYVGNLSF…RIIRTDWDAG (79 aa). Residues 122 to 155 form a disordered region; the sequence is RQYGRGKSGGQVRDEYRQDYDPARGGYGKVVARP. The segment covering 133–143 has biased composition (basic and acidic residues); that stretch reads VRDEYRQDYDP.

The protein belongs to the RRM NCBP2 family. Component of the nuclear cap-binding complex (CBC), a heterodimer composed of ncbp1/cbp80 and ncbp2/cbp20 that interacts with m7GpppG-capped RNA.

It is found in the nucleus. The protein resides in the cytoplasm. Component of the cap-binding complex (CBC), which binds co-transcriptionally to the 5' cap of pre-mRNAs and is involved in various processes such as pre-mRNA splicing, translation regulation, nonsense-mediated mRNA decay, RNA-mediated gene silencing (RNAi) by microRNAs (miRNAs) and mRNA export. The CBC complex is involved in mRNA export from the nucleus, leading to the recruitment of the mRNA export machinery to the 5' end of mRNA and to mRNA export in a 5' to 3' direction through the nuclear pore. The CBC complex is also involved in mediating U snRNA and intronless mRNAs export from the nucleus. The CBC complex is essential for a pioneer round of mRNA translation, before steady state translation when the CBC complex is replaced by cytoplasmic cap-binding protein eIF4E. The pioneer round of mRNA translation mediated by the CBC complex plays a central role in nonsense-mediated mRNA decay (NMD), NMD only taking place in mRNAs bound to the CBC complex, but not on eIF4E-bound mRNAs. The CBC complex enhances NMD in mRNAs containing at least one exon-junction complex (EJC), promoting the interaction between upf1 and upf2. The CBC complex is also involved in 'failsafe' NMD, which is independent of the EJC complex, while it does not participate in Staufen-mediated mRNA decay (SMD). During cell proliferation, the CBC complex is also involved in microRNAs (miRNAs) biogenesis via its interaction with srrt/ars2, thereby being required for miRNA-mediated RNA interference. The CBC complex also acts as a negative regulator of parn, thereby acting as an inhibitor of mRNA deadenylation. In the CBC complex, ncbp2/cbp20 recognizes and binds capped RNAs (m7GpppG-capped RNA) but requires ncbp1/cbp80 to stabilize the movement of its N-terminal loop and lock the CBC into a high affinity cap-binding state with the cap structure. The conventional cap-binding complex with NCBP2 binds both small nuclear RNA (snRNA) and messenger (mRNA) and is involved in their export from the nucleus. The polypeptide is Nuclear cap-binding protein subunit 2 (ncbp2) (Esox lucius (Northern pike)).